Here is a 229-residue protein sequence, read N- to C-terminus: Flagellar L-ring protein (229 aa).

An N-terminal signal peptide occupies residues 1–23 (MNPLTRVALAVAAFAALVLALSA). The N-palmitoyl cysteine moiety is linked to residue cysteine 24. Cysteine 24 carries S-diacylglycerol cysteine lipidation.

This sequence belongs to the FlgH family. The basal body constitutes a major portion of the flagellar organelle and consists of four rings (L,P,S, and M) mounted on a central rod.

The protein resides in the cell outer membrane. The protein localises to the bacterial flagellum basal body. Its function is as follows. Assembles around the rod to form the L-ring and probably protects the motor/basal body from shearing forces during rotation. The protein is Flagellar L-ring protein of Anaeromyxobacter sp. (strain K).